Here is a 407-residue protein sequence, read N- to C-terminus: Membrane protein MosC (407 aa).

A disordered region spans residues 1–24 (MTRTSPRHHAPSETKRRVPMGGVH). Transmembrane regions (helical) follow at residues 31–51 (LTIT…AAWA), 69–89 (GVLL…AGYF), 109–129 (ALVL…IVLF), 157–177 (AFLH…FGVI), 186–206 (SVTL…HLLD), 225–245 (LLMF…IAEW), 255–275 (QVTD…MIAG), 290–310 (ALIA…LFMP), 316–336 (LAGF…IFSE), 347–367 (VGLT…PPII), and 377–397 (GRAL…SVFF).

The protein localises to the cell membrane. Functionally, may be a membrane transport protein that could either transport a precursor for rhizopine biosynthesis into bacteroids or the finished product from the bacteroids. In Rhizobium meliloti (Ensifer meliloti), this protein is Membrane protein MosC (mosC).